The primary structure comprises 101 residues: UPF0060 membrane protein ACIAD1364 (101 aa).

Helical transmembrane passes span 24 to 44 (WLWL…TLHP), 50 to 70 (IYAA…RFID), and 79 to 99 (IWGG…PQGL).

It belongs to the UPF0060 family.

The protein resides in the cell inner membrane. The sequence is that of UPF0060 membrane protein ACIAD1364 from Acinetobacter baylyi (strain ATCC 33305 / BD413 / ADP1).